A 118-amino-acid chain; its full sequence is Large ribosomal subunit protein bL19 (118 aa).

The protein belongs to the bacterial ribosomal protein bL19 family.

Its function is as follows. This protein is located at the 30S-50S ribosomal subunit interface and may play a role in the structure and function of the aminoacyl-tRNA binding site. The polypeptide is Large ribosomal subunit protein bL19 (Onion yellows phytoplasma (strain OY-M)).